Reading from the N-terminus, the 64-residue chain is uncharacterized protein (64 aa).

The tract at residues 1–64 (MNNPNIVPPH…QNQPPQRPQY (64 aa)) is disordered. Positions 8–32 (PPHFNQHQQQNHNQNQPPHHMNNPN) are enriched in low complexity.

This is an uncharacterized protein from Dictyostelium discoideum (Social amoeba).